Consider the following 297-residue polypeptide: Vesicular-fusion protein SEC17 (297 aa).

The protein belongs to the SNAP family.

Its subcellular location is the membrane. Functionally, required for vesicular transport between the endoplasmic reticulum and the Golgi apparatus. In Komagataella phaffii (strain GS115 / ATCC 20864) (Yeast), this protein is Vesicular-fusion protein SEC17 (SEC17).